Reading from the N-terminus, the 348-residue chain is Probable dual-specificity RNA methyltransferase RlmN (348 aa).

The Proton acceptor role is filled by Glu-93. Residues 99 to 333 (TEKRLTACLS…VSLRKSRGLD (235 aa)) form the Radical SAM core domain. A disulfide bond links Cys-106 and Cys-338. [4Fe-4S] cluster-binding residues include Cys-113, Cys-117, and Cys-120. S-adenosyl-L-methionine-binding positions include 160 to 161 (GE), Ser-190, 219 to 221 (SLH), and Asn-295. Cys-338 (S-methylcysteine intermediate) is an active-site residue.

This sequence belongs to the radical SAM superfamily. RlmN family. [4Fe-4S] cluster is required as a cofactor.

It localises to the cytoplasm. It catalyses the reaction adenosine(2503) in 23S rRNA + 2 reduced [2Fe-2S]-[ferredoxin] + 2 S-adenosyl-L-methionine = 2-methyladenosine(2503) in 23S rRNA + 5'-deoxyadenosine + L-methionine + 2 oxidized [2Fe-2S]-[ferredoxin] + S-adenosyl-L-homocysteine. The catalysed reaction is adenosine(37) in tRNA + 2 reduced [2Fe-2S]-[ferredoxin] + 2 S-adenosyl-L-methionine = 2-methyladenosine(37) in tRNA + 5'-deoxyadenosine + L-methionine + 2 oxidized [2Fe-2S]-[ferredoxin] + S-adenosyl-L-homocysteine. Functionally, specifically methylates position 2 of adenine 2503 in 23S rRNA and position 2 of adenine 37 in tRNAs. The protein is Probable dual-specificity RNA methyltransferase RlmN of Prochlorococcus marinus (strain MIT 9215).